We begin with the raw amino-acid sequence, 381 residues long: L-lactate dehydrogenase (381 aa).

In terms of domain architecture, FMN hydroxy acid dehydrogenase spans 1 to 380; the sequence is MIISASTDYR…SADSLVRELG (380 aa). Y24 contacts substrate. FMN contacts are provided by S106 and Q127. A substrate-binding site is contributed by Y129. T155 contributes to the FMN binding site. R164 contributes to the substrate binding site. Residue K251 participates in FMN binding. Residue H275 is the Proton acceptor of the active site. Residue R278 participates in substrate binding. An FMN-binding site is contributed by 306–330; sequence DSGIRTGLDVVRMIALGADSVLLGR.

The protein belongs to the FMN-dependent alpha-hydroxy acid dehydrogenase family. Homotetramer. The cofactor is FMN.

The protein localises to the cell inner membrane. It catalyses the reaction (S)-lactate + A = pyruvate + AH2. In terms of biological role, catalyzes the conversion of L-lactate to pyruvate. Is coupled to the respiratory chain. The protein is L-lactate dehydrogenase of Pseudomonas aeruginosa (strain LESB58).